The chain runs to 522 residues: GMP synthase [glutamine-hydrolyzing] (522 aa).

Residues 9–204 (KILILDFGAQ…VVDICGCQML (196 aa)) enclose the Glutamine amidotransferase type-1 domain. Cysteine 86 serves as the catalytic Nucleophile. Residues histidine 178 and glutamate 180 contribute to the active site. Residues 205-397 (WTAANIIEDQ…LGLPHAMVYR (193 aa)) enclose the GMPS ATP-PPase domain. Position 232–238 (232–238 (SGGVDSS)) interacts with ATP.

Homodimer.

It carries out the reaction XMP + L-glutamine + ATP + H2O = GMP + L-glutamate + AMP + diphosphate + 2 H(+). It participates in purine metabolism; GMP biosynthesis; GMP from XMP (L-Gln route): step 1/1. Its function is as follows. Catalyzes the synthesis of GMP from XMP. The polypeptide is GMP synthase [glutamine-hydrolyzing] (guaA) (Xylella fastidiosa (strain 9a5c)).